A 313-amino-acid chain; its full sequence is ADP-L-glycero-D-manno-heptose-6-epimerase (313 aa).

NADP(+)-binding positions include 10 to 11 (MI), 31 to 32 (DN), Lys-38, Arg-53, 75 to 79 (EGACS), and Asn-92. The active-site Proton acceptor is Tyr-139. Residue Lys-143 participates in NADP(+) binding. Residue Asn-174 participates in substrate binding. NADP(+) is bound by residues Val-175 and Lys-183. Lys-183 (proton acceptor) is an active-site residue. Residues Ser-185, His-192, 206–209 (FAGS), Arg-214, and Tyr-277 each bind substrate.

Belongs to the NAD(P)-dependent epimerase/dehydratase family. HldD subfamily. Homopentamer. It depends on NADP(+) as a cofactor.

The enzyme catalyses ADP-D-glycero-beta-D-manno-heptose = ADP-L-glycero-beta-D-manno-heptose. It functions in the pathway nucleotide-sugar biosynthesis; ADP-L-glycero-beta-D-manno-heptose biosynthesis; ADP-L-glycero-beta-D-manno-heptose from D-glycero-beta-D-manno-heptose 7-phosphate: step 4/4. In terms of biological role, catalyzes the interconversion between ADP-D-glycero-beta-D-manno-heptose and ADP-L-glycero-beta-D-manno-heptose via an epimerization at carbon 6 of the heptose. The polypeptide is ADP-L-glycero-D-manno-heptose-6-epimerase (Vibrio campbellii (strain ATCC BAA-1116)).